The sequence spans 1154 residues: PDZ domain-containing protein 8 (1154 aa).

A helical transmembrane segment spans residues 2 to 24 (GLLLMILASAVLGSFLTLLAQFF). Residues 66–90 (DEEPSGAAPEGGATPTAAPETPAPP) form a disordered region. A compositionally biased stretch (low complexity) spans 70 to 85 (SGAAPEGGATPTAAPE). An SMP-LTD domain is found at 91 to 294 (TRETCYFLNA…LPNYKIRFKP (204 aa)). Residues 366 to 449 (TVELIKGNLQ…RVLVYYERPV (84 aa)) form the PDZ domain. 3 positions are modified to phosphoserine: serine 496, serine 521, and serine 538. A disordered region spans residues 548–612 (GSHPLPPKIQ…SADAPNQAEP (65 aa)). The Phorbol-ester/DAG-type zinc-finger motif lies at 840 to 891 (KHSFQDTQFQNPTWCDYCKKKVWTKAASQCMFCAYVCHKKCQEKCLAETSVC). Positions 955–999 (RLSEPGTDLVEPSPKHTPNTSDNEGSDTEVCGPNSPSKRGNSTGI) are disordered. A phosphoserine mark is found at serine 967 and serine 980. The segment covering 988–998 (NSPSKRGNSTG) has biased composition (polar residues). Positions 1028 to 1063 (PTEERIQKLEFMLDKLQNEIDQELEHNNSLVREEKE) form a coiled coil. Positions 1132 to 1144 (SQLIDSQPFSSIS) are enriched in polar residues. The segment at 1132 to 1154 (SQLIDSQPFSSISDDLFGPSESV) is disordered.

In terms of assembly, interacts with MSN. (Microbial infection) Interacts with HIV-1 Gag polyprotein p55.

The protein localises to the endoplasmic reticulum membrane. Its function is as follows. Molecular tethering protein that connects endoplasmic reticulum and mitochondria membranes. PDZD8-dependent endoplasmic reticulum-mitochondria membrane tethering is essential for endoplasmic reticulum-mitochondria Ca(2+) transfer. In neurons, involved in the regulation of dendritic Ca(2+) dynamics by regulating mitochondrial Ca(2+) uptake in neurons. Plays an indirect role in the regulation of cell morphology and cytoskeletal organization. May inhibit herpes simplex virus 1 infection at an early stage. This is PDZ domain-containing protein 8 from Homo sapiens (Human).